We begin with the raw amino-acid sequence, 41 residues long: Large ribosomal subunit protein bL36 (41 aa).

It belongs to the bacterial ribosomal protein bL36 family.

In Caulobacter vibrioides (strain ATCC 19089 / CIP 103742 / CB 15) (Caulobacter crescentus), this protein is Large ribosomal subunit protein bL36.